A 593-amino-acid polypeptide reads, in one-letter code: Probable serine/threonine-protein kinase fhkA (593 aa).

Positions 1–24 (MSQTNYIPSTPNKSTPPSELSSTP) are disordered. Residues 54-111 (ITIGRSKTCNIVVPELIVSGKHCIITRADAIENGNTNYGLLMIQDQSTNGTFINGKLI) form the FHA domain. The 293-residue stretch at 180 to 472 (YDFIKELGSG…VEQALNHPWI (293 aa)) folds into the Protein kinase domain. Residues 186 to 194 (LGSGNFSVV) and lysine 209 contribute to the ATP site. Aspartate 307 functions as the Proton acceptor in the catalytic mechanism.

It belongs to the protein kinase superfamily. CAMK Ser/Thr protein kinase family. CHK2 subfamily.

It catalyses the reaction L-seryl-[protein] + ATP = O-phospho-L-seryl-[protein] + ADP + H(+). The enzyme catalyses L-threonyl-[protein] + ATP = O-phospho-L-threonyl-[protein] + ADP + H(+). The sequence is that of Probable serine/threonine-protein kinase fhkA (fhkA) from Dictyostelium discoideum (Social amoeba).